Here is a 405-residue protein sequence, read N- to C-terminus: S-adenosylmethionine synthase (405 aa).

Histidine 22 provides a ligand contact to ATP. Aspartate 24 is a Mg(2+) binding site. Residue glutamate 50 coordinates K(+). 2 residues coordinate L-methionine: glutamate 63 and glutamine 107. The tract at residues glutamine 107–arginine 117 is flexible loop. Residues aspartate 184 to lysine 186, arginine 250 to phenylalanine 251, aspartate 259, arginine 265 to lysine 266, alanine 282, and lysine 286 contribute to the ATP site. Aspartate 259 contacts L-methionine. An L-methionine-binding site is contributed by lysine 290.

The protein belongs to the AdoMet synthase family. In terms of assembly, homotetramer; dimer of dimers. It depends on Mg(2+) as a cofactor. Requires K(+) as cofactor.

The protein localises to the cytoplasm. The catalysed reaction is L-methionine + ATP + H2O = S-adenosyl-L-methionine + phosphate + diphosphate. It functions in the pathway amino-acid biosynthesis; S-adenosyl-L-methionine biosynthesis; S-adenosyl-L-methionine from L-methionine: step 1/1. Functionally, catalyzes the formation of S-adenosylmethionine (AdoMet) from methionine and ATP. The overall synthetic reaction is composed of two sequential steps, AdoMet formation and the subsequent tripolyphosphate hydrolysis which occurs prior to release of AdoMet from the enzyme. This chain is S-adenosylmethionine synthase, found in Roseiflexus castenholzii (strain DSM 13941 / HLO8).